Reading from the N-terminus, the 43-residue chain is Cytochrome b559 subunit beta (43 aa).

The helical transmembrane segment at 18 to 34 (WLAVHTLAIPTVFFLGA) threads the bilayer. Heme is bound at residue histidine 22.

The protein belongs to the PsbE/PsbF family. Heterodimer of an alpha subunit and a beta subunit. PSII is composed of 1 copy each of membrane proteins PsbA, PsbB, PsbC, PsbD, PsbE, PsbF, PsbH, PsbI, PsbJ, PsbK, PsbL, PsbM, PsbT, PsbX, PsbY, PsbZ, Psb30/Ycf12, peripheral proteins PsbO, CyanoQ (PsbQ), PsbU, PsbV and a large number of cofactors. It forms dimeric complexes. Heme b is required as a cofactor.

Its subcellular location is the cellular thylakoid membrane. Its function is as follows. This b-type cytochrome is tightly associated with the reaction center of photosystem II (PSII). PSII is a light-driven water:plastoquinone oxidoreductase that uses light energy to abstract electrons from H(2)O, generating O(2) and a proton gradient subsequently used for ATP formation. It consists of a core antenna complex that captures photons, and an electron transfer chain that converts photonic excitation into a charge separation. This Synechococcus sp. (strain JA-2-3B'a(2-13)) (Cyanobacteria bacterium Yellowstone B-Prime) protein is Cytochrome b559 subunit beta.